Reading from the N-terminus, the 365-residue chain is Protein-glutamate methylesterase/protein-glutamine glutaminase 2 (365 aa).

The Response regulatory domain occupies 6–123 (RVLIIDDSAS…ADSLSDDAMR (118 aa)). Asp-57 is modified (4-aspartylphosphate). The CheB-type methylesterase domain maps to 173–359 (AKTTEMVVCV…PLDQIAREVL (187 aa)). Catalysis depends on residues Ser-185, His-211, and Asp-307.

Belongs to the CheB family. In terms of processing, phosphorylated by CheA. Phosphorylation of the N-terminal regulatory domain activates the methylesterase activity.

Its subcellular location is the cytoplasm. It catalyses the reaction [protein]-L-glutamate 5-O-methyl ester + H2O = L-glutamyl-[protein] + methanol + H(+). The catalysed reaction is L-glutaminyl-[protein] + H2O = L-glutamyl-[protein] + NH4(+). Its function is as follows. Involved in chemotaxis. Part of a chemotaxis signal transduction system that modulates chemotaxis in response to various stimuli. Catalyzes the demethylation of specific methylglutamate residues introduced into the chemoreceptors (methyl-accepting chemotaxis proteins or MCP) by CheR. Also mediates the irreversible deamidation of specific glutamine residues to glutamic acid. The chain is Protein-glutamate methylesterase/protein-glutamine glutaminase 2 from Rhizobium johnstonii (strain DSM 114642 / LMG 32736 / 3841) (Rhizobium leguminosarum bv. viciae).